Reading from the N-terminus, the 898-residue chain is DNA mismatch repair protein MutS (898 aa).

An ATP-binding site is contributed by glycine 646–serine 653.

It belongs to the DNA mismatch repair MutS family.

Functionally, this protein is involved in the repair of mismatches in DNA. It is possible that it carries out the mismatch recognition step. This protein has a weak ATPase activity. In Brucella ovis (strain ATCC 25840 / 63/290 / NCTC 10512), this protein is DNA mismatch repair protein MutS.